The primary structure comprises 1289 residues: uncharacterized protein (1289 aa).

Residues 615-733 enclose the MHD1 domain; the sequence is LDMYDVLKEL…DGMLSYSAQL (119 aa). A disordered region spans residues 745–774; sequence DEPSYSLESSDTRSSLSLNNANVNHEKSRS. Positions 748–762 are enriched in low complexity; the sequence is SYSLESSDTRSSLSL. The C2 domain maps to 834–966; the sequence is AQYHSSHNLE…DDGFPIDFSL (133 aa). An MHD2 domain is found at 1044 to 1184; that stretch reads YDAILPLFDY…KSVSELKDEV (141 aa).

The protein resides in the cytoplasm. This is an uncharacterized protein from Saccharomyces cerevisiae (strain ATCC 204508 / S288c) (Baker's yeast).